The primary structure comprises 673 residues: UvrABC system protein B (673 aa).

A Helicase ATP-binding domain is found at 24–182; the sequence is EGVERNDPAQ…YSFVEILYNR (159 aa). 37–44 is an ATP binding site; it reads GVTGSGKT. Residues 90–113 carry the Beta-hairpin motif; it reads YYDYYQPEAFMPTSGLYIEKDLAI. Residues 429 to 591 form the Helicase C-terminal domain; sequence QIDDLLDEIQ…ITPITVNKSK (163 aa). The UVR domain occupies 634-669; the sequence is TKMIDRAKKDMDKAAKDLDFVEAARYRDEMFALQKI.

It belongs to the UvrB family. In terms of assembly, forms a heterotetramer with UvrA during the search for lesions. Interacts with UvrC in an incision complex.

The protein resides in the cytoplasm. The UvrABC repair system catalyzes the recognition and processing of DNA lesions. A damage recognition complex composed of 2 UvrA and 2 UvrB subunits scans DNA for abnormalities. Upon binding of the UvrA(2)B(2) complex to a putative damaged site, the DNA wraps around one UvrB monomer. DNA wrap is dependent on ATP binding by UvrB and probably causes local melting of the DNA helix, facilitating insertion of UvrB beta-hairpin between the DNA strands. Then UvrB probes one DNA strand for the presence of a lesion. If a lesion is found the UvrA subunits dissociate and the UvrB-DNA preincision complex is formed. This complex is subsequently bound by UvrC and the second UvrB is released. If no lesion is found, the DNA wraps around the other UvrB subunit that will check the other stand for damage. The chain is UvrABC system protein B from Cytophaga hutchinsonii (strain ATCC 33406 / DSM 1761 / CIP 103989 / NBRC 15051 / NCIMB 9469 / D465).